We begin with the raw amino-acid sequence, 347 residues long: Protein NDL3 (347 aa).

The protein belongs to the NDRG family. As to quaternary structure, interacts with the heterodimers formed by GB1 and GG1, or GB1 and GG2. Interacts with RGS1.

The protein resides in the cytoplasm. Its function is as follows. Involved in a signaling pathway that modulates root auxin transport and auxin gradients. Acts partially by positively regulating the auxin carrier PIN2 and AUX1. Acts, together with GB1 as positive regulator of meristem initiation and branching. GB1 and NDL3 positively regulate basipetal inflorescence auxin transport and modulate MAX2 expression in shoots, which regulates organ and lateral meristem formation by the establishment and maintenance of auxin gradients. The sequence is that of Protein NDL3 from Arabidopsis thaliana (Mouse-ear cress).